We begin with the raw amino-acid sequence, 283 residues long: uncharacterized protein (283 aa).

In terms of domain architecture, HTH araC/xylS-type spans 172 to 270 (EAIRDYIDER…ERSPSEYRRQ (99 aa)). 2 consecutive DNA-binding regions (H-T-H motif) follow at residues 189-210 (ESVA…QKTG) and 237-260 (VKEV…RKNT).

This is an uncharacterized protein from Escherichia coli (strain K12).